We begin with the raw amino-acid sequence, 115 residues long: DNA-binding protein NP_4416A (115 aa).

Residues 1 to 11 (MSGEPTDEDLE) show a composition bias toward acidic residues. The segment at 1 to 46 (MSGEPTDEDLEELRKKKMEQLKEQGGEGQSEAAEAQRQQAEAQKKA) is disordered. The segment covering 12–25 (ELRKKKMEQLKEQG) has biased composition (basic and acidic residues). Low complexity predominate over residues 29–41 (QSEAAEAQRQQAE).

This sequence belongs to the PDCD5 family.

The polypeptide is DNA-binding protein NP_4416A (Natronomonas pharaonis (strain ATCC 35678 / DSM 2160 / CIP 103997 / JCM 8858 / NBRC 14720 / NCIMB 2260 / Gabara) (Halobacterium pharaonis)).